The following is a 201-amino-acid chain: LexA repressor 1 (201 aa).

The segment at residues 28 to 48 is a DNA-binding region (H-T-H motif); the sequence is LREIAAHLKISGTLGVSKHLE. Residues serine 120 and lysine 157 each act as for autocatalytic cleavage activity in the active site.

This sequence belongs to the peptidase S24 family. In terms of assembly, homodimer.

The catalysed reaction is Hydrolysis of Ala-|-Gly bond in repressor LexA.. Represses a number of genes involved in the response to DNA damage (SOS response), including recA and lexA. In the presence of single-stranded DNA, RecA interacts with LexA causing an autocatalytic cleavage which disrupts the DNA-binding part of LexA, leading to derepression of the SOS regulon and eventually DNA repair. In Geobacter sulfurreducens (strain ATCC 51573 / DSM 12127 / PCA), this protein is LexA repressor 1.